A 508-amino-acid chain; its full sequence is Tyrosine decarboxylase 4 (508 aa).

Lys318 carries the post-translational modification N6-(pyridoxal phosphate)lysine.

This sequence belongs to the group II decarboxylase family. In terms of assembly, homodimer. It depends on pyridoxal 5'-phosphate as a cofactor.

The catalysed reaction is L-tyrosine + H(+) = tyramine + CO2. The polypeptide is Tyrosine decarboxylase 4 (TYRDC-4) (Petroselinum crispum (Parsley)).